The primary structure comprises 421 residues: Glutamate-1-semialdehyde 2,1-aminomutase (421 aa).

K261 bears the N6-(pyridoxal phosphate)lysine mark.

This sequence belongs to the class-III pyridoxal-phosphate-dependent aminotransferase family. HemL subfamily. Pyridoxal 5'-phosphate is required as a cofactor.

It is found in the cytoplasm. It carries out the reaction (S)-4-amino-5-oxopentanoate = 5-aminolevulinate. The protein operates within porphyrin-containing compound metabolism; protoporphyrin-IX biosynthesis; 5-aminolevulinate from L-glutamyl-tRNA(Glu): step 2/2. This is Glutamate-1-semialdehyde 2,1-aminomutase (hemL) from Thermoplasma acidophilum (strain ATCC 25905 / DSM 1728 / JCM 9062 / NBRC 15155 / AMRC-C165).